We begin with the raw amino-acid sequence, 197 residues long: dTTP/UTP pyrophosphatase (197 aa).

Residue Asp70 is the Proton acceptor of the active site.

Belongs to the Maf family. YhdE subfamily. It depends on a divalent metal cation as a cofactor.

The protein localises to the cytoplasm. It catalyses the reaction dTTP + H2O = dTMP + diphosphate + H(+). It carries out the reaction UTP + H2O = UMP + diphosphate + H(+). Its function is as follows. Nucleoside triphosphate pyrophosphatase that hydrolyzes dTTP and UTP. May have a dual role in cell division arrest and in preventing the incorporation of modified nucleotides into cellular nucleic acids. The sequence is that of dTTP/UTP pyrophosphatase (yceF2) from Escherichia coli O6:K15:H31 (strain 536 / UPEC).